Here is a 619-residue protein sequence, read N- to C-terminus: MEVEAAEARSPAPGYKRSGRRYKCLSCTKTFPNAPRAARHAATHGPADCSEEVAEVKPKPETEAKAEEASGEKVSGSAAKPRPYACPLCPKAYKTAPELRSHGRSHTGEKPFPCPECGRRFMQPVCLRVHLASHAGELPFRCAHCPKAYGALSKLKIHQRGHTGERPYACADCGKSFADPSVFRKHRRTHAGLRPYSCERCGKAYAELKDLRNHERSHTGERPFLCSECGKSFSRSSSLTCHQRIHAAQKPYRCPACGKGFTQLSSYQSHERTHSGEKPFLCPRCGRMFSDPSSFRRHQRAHEGVKPYHCEKCGKDFRQPADLAMHRRVHTGDRPFKCLQCDKTFVASWDLKRHALVHSGQRPFRCEECGRAFAERASLTKHSRVHSGERPFHCNACGKSFVVSSSLRKHERTHRSSEAAGVPPAQELVVGLALPVGVAGESSAAPAAGAGLGDPPAGLLGLPPESGGVMATQWQVVGMTVEHVECQDAGVREAPGPLEGAGEAGGEEADEKPPQFVCRECKETFSTMTLLRRHERSHPELRPFPCTQCGKSFSDRAGLRKHSRTHSSVRPYTCPHCPKAFLSASDLRKHERTHPVPMGTPTPLEPLVALLGMPEEGPA.

Met-1 carries the post-translational modification N-acetylmethionine. Ser-10 bears the Phosphoserine mark. The C2H2-type 1 zinc-finger motif lies at 22–44 (YKCLSCTKTFPNAPRAARHAATH). A disordered region spans residues 34–79 (APRAARHAATHGPADCSEEVAEVKPKPETEAKAEEASGEKVSGSAA). The segment covering 54 to 71 (AEVKPKPETEAKAEEASG) has biased composition (basic and acidic residues). Glycyl lysine isopeptide (Lys-Gly) (interchain with G-Cter in SUMO2) cross-links involve residues Lys-57, Lys-59, Lys-65, and Lys-80. 11 C2H2-type zinc fingers span residues 84-106 (YACP…GRSH), 112-134 (FPCP…LASH), 140-162 (FRCA…QRGH), 168-190 (YACA…RRTH), 196-218 (YSCE…ERSH), 224-246 (FLCS…QRIH), 252-274 (YRCP…ERTH), 280-302 (FLCP…QRAH), 308-330 (YHCE…RRVH), 336-358 (FKCL…ALVH), and 364-386 (FRCE…SRVH). A Glycyl lysine isopeptide (Lys-Gly) (interchain with G-Cter in SUMO2) cross-link involves residue Lys-154. The residue at position 387 (Ser-387) is a Phosphoserine. The C2H2-type 13 zinc-finger motif lies at 392-414 (FHCNACGKSFVVSSSLRKHERTH). The tract at residues 492-513 (REAPGPLEGAGEAGGEEADEKP) is disordered. Lys-512 participates in a covalent cross-link: Glycyl lysine isopeptide (Lys-Gly) (interchain with G-Cter in SUMO2). 3 C2H2-type zinc fingers span residues 516–538 (FVCR…ERSH), 544–566 (FPCT…SRTH), and 572–594 (YTCP…ERTH).

The protein belongs to the krueppel C2H2-type zinc-finger protein family.

It localises to the nucleus. May be involved in transcriptional regulation. May play a role in DNA repair process. This chain is Zinc finger protein 668 (ZNF668), found in Homo sapiens (Human).